Reading from the N-terminus, the 290-residue chain is MEELHAEHQYLSQVKHILNCGNFKHDRTGVGTLSVFGMQSRYSLEKDFPLLTTKRVFWRGVVEELLWFIRGSTDSKELAASGVHIWDANGSRSYLDKLGLFDREEGDLGPVYGFQWRHFGAEYQGLKHNYGGEGVDQLKQIINTIHTNPTDRRMLMCAWNVLDVPKMALPPCHVLSQFYVCDGKLSCQLYQRSADMGLGVPFNIASYSLLTCMIAHVTDLVPGEFIHTLGDAHVYVNHVDALTEQLTRTPRPFPTLKFARKVASIDDFKANDIILENYNPYPSIKMPMAV.

Residues arginine 27 and arginine 152–arginine 153 each bind dUMP. Cysteine 172 serves as the catalytic Nucleophile. Residues arginine 192–aspartate 195, asparagine 203, and histidine 233–tyrosine 235 each bind dUMP. (6R)-5,10-methylene-5,6,7,8-tetrahydrofolate is bound at residue aspartate 195. (6R)-5,10-methylene-5,6,7,8-tetrahydrofolate is bound at residue alanine 289.

It belongs to the thymidylate synthase family. Homodimer.

It catalyses the reaction dUMP + (6R)-5,10-methylene-5,6,7,8-tetrahydrofolate = 7,8-dihydrofolate + dTMP. The protein operates within pyrimidine metabolism; dTTP biosynthesis. The polypeptide is Thymidylate synthase (TS) (Ateles).